The following is a 519-amino-acid chain: Cytochrome P450 88A1 (519 aa).

A helical membrane pass occupies residues 1–21 (MLGVGMAAAVLLGAVALLLAD). Residue Cys-466 participates in heme binding.

It belongs to the cytochrome P450 family. Requires heme as cofactor. As to expression, expressed in roots, developing leaves, the vegetative meristem, and suspension culture cells.

Its subcellular location is the membrane. It functions in the pathway plant hormone biosynthesis; gibberellin biosynthesis. This Zea mays (Maize) protein is Cytochrome P450 88A1 (CYP88A1).